A 265-amino-acid polypeptide reads, in one-letter code: 2-C-methyl-D-erythritol 4-phosphate cytidylyltransferase (265 aa).

Residues 231-241 are compositionally biased toward basic and acidic residues; the sequence is DRGGASREAER. The disordered stretch occupies residues 231–265; that stretch reads DRGGASREAERSAMPSAATSVFSGARSAASGSEEV. A compositionally biased stretch (low complexity) spans 253 to 265; the sequence is SGARSAASGSEEV.

The protein belongs to the IspD/TarI cytidylyltransferase family. IspD subfamily.

The enzyme catalyses 2-C-methyl-D-erythritol 4-phosphate + CTP + H(+) = 4-CDP-2-C-methyl-D-erythritol + diphosphate. Its pathway is isoprenoid biosynthesis; isopentenyl diphosphate biosynthesis via DXP pathway; isopentenyl diphosphate from 1-deoxy-D-xylulose 5-phosphate: step 2/6. Functionally, catalyzes the formation of 4-diphosphocytidyl-2-C-methyl-D-erythritol from CTP and 2-C-methyl-D-erythritol 4-phosphate (MEP). In Xanthomonas campestris pv. campestris (strain 8004), this protein is 2-C-methyl-D-erythritol 4-phosphate cytidylyltransferase.